The following is a 245-amino-acid chain: 1-(5-phosphoribosyl)-5-[(5-phosphoribosylamino)methylideneamino] imidazole-4-carboxamide isomerase 1 (245 aa).

The active-site Proton acceptor is Asp7. Residue Asp129 is the Proton donor of the active site.

Belongs to the HisA/HisF family.

The protein localises to the cytoplasm. It carries out the reaction 1-(5-phospho-beta-D-ribosyl)-5-[(5-phospho-beta-D-ribosylamino)methylideneamino]imidazole-4-carboxamide = 5-[(5-phospho-1-deoxy-D-ribulos-1-ylimino)methylamino]-1-(5-phospho-beta-D-ribosyl)imidazole-4-carboxamide. Its pathway is amino-acid biosynthesis; L-histidine biosynthesis; L-histidine from 5-phospho-alpha-D-ribose 1-diphosphate: step 4/9. This is 1-(5-phosphoribosyl)-5-[(5-phosphoribosylamino)methylideneamino] imidazole-4-carboxamide isomerase 1 (hisA1) from Photorhabdus laumondii subsp. laumondii (strain DSM 15139 / CIP 105565 / TT01) (Photorhabdus luminescens subsp. laumondii).